The chain runs to 188 residues: Large ribosomal subunit protein bL35m (188 aa).

This sequence belongs to the bacterial ribosomal protein bL35 family.

The protein localises to the mitochondrion. This Pongo abelii (Sumatran orangutan) protein is Large ribosomal subunit protein bL35m (MRPL35).